We begin with the raw amino-acid sequence, 498 residues long: MSTMALHRTASTKSDTTMACPNGLVKNLPLGGNTKCSACGSHRAEKRRASSTSSVSTTPTSPSFSEADWSPLHNSSQEPQPEYTKVANSLMRAITDYVGHLQNENLPMPSLEPAADAHGVLKHPEGVAARNAVVELAQRIVAMTMDPDMNLLISSLQFHFCSSLKVAIDLKVHEHVPRRGSITSSELAAKVGADESILVRIMRALILKHVFCSPTPGTYAHTAMSWCMMKSPDAIDLLGHRLDESFRASSRQADALALVNYREPDEADVKGFSMAFGTTENFWEVLGHEGEEERAQRFNRAMRAVSLNTLDVIPRMYPFDRIRGDGLLVDVGGGLGQVARAIMGAHRGAGLRSCIVQDAHAGDDAKKQPDVMEANRKLGVELQKHNFFDPQPVKGASVYFLRHIFHDWPDRACVKILKQTVEAMGKDSTLLICDQVVDDEASPQATLYDIDMWSLFGGKERNRSEWEALFRSADERLYIKKVWTTAEAPTTMLEVCLS.

Residues 1–19 (MSTMALHRTASTKSDTTMA) are compositionally biased toward polar residues. 2 disordered regions span residues 1–23 (MSTMALHRTASTKSDTTMACPNG) and 42–83 (HRAE…QPEY). Over residues 50–65 (SSTSSVSTTPTSPSFS) the composition is skewed to low complexity. Asp358 lines the S-adenosyl-L-methionine pocket. His406 (proton acceptor) is an active-site residue.

The protein belongs to the class I-like SAM-binding methyltransferase superfamily. Cation-independent O-methyltransferase family.

It functions in the pathway secondary metabolite biosynthesis. O-methyltransferase; part of the gene cluster that mediates the biosynthesis of a tyrosine-derived cytochalasan acting as a fungal signal recognized by resistant rice plants and leads to avirulence in Pi33 resistant rice cultivars. The first step in the pathway is catalyzed by the hybrid PKS-NRPS ACE1, assisted by the enoyl reductase RAP1, that are responsible for fusion of the tyrosine precursor and the polyketide backbone. The polyketide synthase module (PKS) of ACE1 is responsible for the synthesis of the polyketide backbone and the downstream nonribosomal peptide synthetase (NRPS) amidates the carboxyl end of the polyketide with the tyrosine precursor. Because ACE1 lacks a designated enoylreductase (ER) domain, the required activity is provided the enoyl reductase RAP1. Reduction by the hydrolyase ORFZ, followed by dehydration and intra-molecular Diels-Alder cyclization by the Diels-Alderase ORF3 then yield the required isoindolone-fused macrocycle. A number of oxidative steps catalyzed by the tailoring enzymes identified within the cluster, including cytochrome P450 monooxygenases CYP1 to CYP4, the FAD-linked oxidoreductase OXR2 and the short-chain dehydrogenase/reductase OXR1, are further required to afford the final cytochalasans that confer avirulence and which have still to be identified. The monooxygenase CYP1 has been shown to be a site-selective C-18 hydroxylase whereas the function of CYP3 is the site-selective epoxidation of the C-6/C-7 olefin that is present in some intermediate compounds. Finally, SYN2 and RAP2 are not required for avirulence in Pi33 resistant rice cultivars. The sequence is that of O-methyltransferase OME1 from Pyricularia oryzae (strain 70-15 / ATCC MYA-4617 / FGSC 8958) (Rice blast fungus).